The following is a 1378-amino-acid chain: MCDMLDNKLGNRLRVDFSNISKQIEIPNLLQLQKKSFDYFLNLDNGESGIEKVFKSIFPIHDPQNRLSLEYVSSEIGKPKYTIRECMERGLTYSVNLKMKIRLTLHEKDEKTGEKVGVKDIKEQEIYIREIPLMTDRVSFIINGVERVVVNQLHRSPGVIFKEEESSTVANKLVYTAQIIPDRGSWLYFEYDAKDVLYVRINKRRKVPVTMLFRALGYKKQDIIKLFYPIQTIHVKKDKFLTEFNPNDFMDRIEYDIKDEKGKIVHQAGKRLTKKKAEQLIKDGLKWIEYPVEILLNRYLANPIIDKESGEVLFDSLTLLDESKLAKIKEQKSFDIANDLANGVDAAIINSFAQDGETLKLLKQSENIDDENDLAAIRIYKVMRPGEPVVKDAAKAFVNDLFFNPERYDLTKVGRMKMNHKLGLEVPEYVTVLTNEDIIKTAKYLIKVKNGKGHIDDRDHLGNRRIRSIGELLANELHLGLAKMQKAIRDKFTSLNADLDKVMPYDLINPKMITTTIIEFFTGGQLSQFMDQTNPLSEVTHKRRLSALGEGGLVKERAGFEVRDVHATHYGRICPVETPEGQNIGLINTLSTYAKVNELGFVEAPYRKVVNGKVTNEVVYLTATQEEGLFIAPASTKVDAKGNIVEEFVEARQDGETILARREEVQLIDLCSGMVVGVAASLIPFLEHDDANRALMGSNMQRQAVPLLTASAPIVGTGMEQIIARDAWEAVKAKRGGVVEKVDNKSIFILGEDDKGPFIDHYTMEKNLRTNQNTNYIQHPIVKKGDIVKAGQIIADGPSMDQGELAIGKNALIAFMPWNGYNYEDAIVVSERIIREDTFTSVHIYEKEIEARELKDGIEEITKDIPNVKEEDVAHLDESGIAKIGTHIKPGMILVGKVSPKGEVKPTPEERLLRAIFGEKAGHVVNKSLYATASLEGVVVDVKIFTKKGYEKDDRAIKSYDKEKMALEKEHHDRLLMMDREEMLRVCALLSKASLNSDQKIGDKNYKKGQTADISELEKINRFTLTTLIKAYSKEIQKEYDDLKNHFQNEKKKLKAEHDEKLEILEKDDILPSGVIKLVKVYIATKRKLKVGDKMAGRHGNKGIVSTIVPEVDMPYLPNGKSVDIALNPLGVPSRMNIGQILESHLGLVGLRLGDQIQEIFDRKQKDFLKELRAKMLEICSIPRLANEKEFIKSLSDEELLNYARDWSKGVKFSTPVFEGVNIEEFSKLFKMAKIDMDGKTELYDGRTGEKIAERVHVGCMYMLKLHHLVDEKVHARSTGPYSLVTQQPVGGKALFGGQRFGEMEVWALEAYGAAHTLREMLTIKSDDVEGRFSAYKALTKGENVPATGIPETFFVLTNELKSLALDVEIFDKDEDNE.

The protein belongs to the RNA polymerase beta chain family. In terms of assembly, the RNAP catalytic core consists of 2 alpha, 1 beta, 1 beta' and 1 omega subunit. When a sigma factor is associated with the core the holoenzyme is formed, which can initiate transcription.

The catalysed reaction is RNA(n) + a ribonucleoside 5'-triphosphate = RNA(n+1) + diphosphate. Functionally, DNA-dependent RNA polymerase catalyzes the transcription of DNA into RNA using the four ribonucleoside triphosphates as substrates. The protein is DNA-directed RNA polymerase subunit beta of Campylobacter jejuni (strain RM1221).